The following is a 640-amino-acid chain: Threonine--tRNA ligase (640 aa).

Residues Asp224–Pro525 are catalytic. Zn(2+)-binding residues include Cys323, His374, and His502.

It belongs to the class-II aminoacyl-tRNA synthetase family. In terms of assembly, homodimer. Zn(2+) is required as a cofactor.

The protein localises to the cytoplasm. The enzyme catalyses tRNA(Thr) + L-threonine + ATP = L-threonyl-tRNA(Thr) + AMP + diphosphate + H(+). Catalyzes the attachment of threonine to tRNA(Thr) in a two-step reaction: L-threonine is first activated by ATP to form Thr-AMP and then transferred to the acceptor end of tRNA(Thr). Also edits incorrectly charged L-seryl-tRNA(Thr). The polypeptide is Threonine--tRNA ligase (Tropheryma whipplei (strain Twist) (Whipple's bacillus)).